The chain runs to 362 residues: RNA-binding protein 4 (362 aa).

2 RRM domains span residues Val-2 to Asn-72 and Thr-78 to Ser-148. Lys-79 participates in a covalent cross-link: Glycyl lysine isopeptide (Lys-Gly) (interchain with G-Cter in SUMO2). Residue Ser-86 is modified to Phosphoserine. Lys-92 participates in a covalent cross-link: Glycyl lysine isopeptide (Lys-Gly) (interchain with G-Cter in SUMO2). Residues Ser-160–Val-177 form a CCHC-type zinc finger. Residues Ala-196–Phe-362 are interaction with TNPO3. The tract at residues Arg-306–Ser-336 is disordered. Ser-307 carries the post-translational modification Phosphoserine.

In terms of assembly, interacts with TNPO3; the interaction mediates nuclear import of the protein and is disrupted by nuclear Ran bound to GTP. Interacts with EIF4G1 and WT1. Interacts with EIF4A1; the interaction is modulated under stress-induced conditions. Interacts with AGO1. Interacts with AGO2; the interaction occurs under both cell proliferation and differentiation conditions and in an RNA- and phosphorylation-independent manner. Interacts with DDX5; the interaction occurs in an RNA-independent manner. Interacts with RBPMS; the interaction allows cooperative assembly of RNA-bound stable cell-specific alternative splicing regulatory complexes. Phosphorylated. Phosphorylated in vitro on Ser-307 by SRPK1. Phosphorylation on Ser-307 is induced upon cell stress signaling, which alters its subcellular localization and may modulate its activity on IRES-mediated mRNA translation. Phosphorylation on Ser-307 is induced upon cell muscle differentiation.

The protein resides in the nucleus. The protein localises to the nucleolus. It is found in the nucleus speckle. It localises to the cytoplasm. Its subcellular location is the cytoplasmic granule. RNA-binding factor involved in multiple aspects of cellular processes like alternative splicing of pre-mRNA and translation regulation. Modulates alternative 5'-splice site and exon selection. Acts as a muscle cell differentiation-promoting factor. Activates exon skipping of the PTB pre-mRNA during muscle cell differentiation. Antagonizes the activity of the splicing factor PTBP1 to modulate muscle cell-specific exon selection of alpha tropomyosin. Binds to intronic pyrimidine-rich sequence of the TPM1 and MAPT pre-mRNAs. Required for the translational activation of PER1 mRNA in response to circadian clock. Binds directly to the 3'-UTR of the PER1 mRNA. Exerts a suppressive activity on Cap-dependent translation via binding to CU-rich responsive elements within the 3'UTR of mRNAs, a process increased under stress conditions or during myocytes differentiation. Recruits EIF4A1 to stimulate IRES-dependent translation initiation in respons to cellular stress. Associates to internal ribosome entry segment (IRES) in target mRNA species under stress conditions. Plays a role for miRNA-guided RNA cleavage and translation suppression by promoting association of AGO2-containing miRNPs with their cognate target mRNAs. Associates with miRNAs during muscle cell differentiation. Binds preferentially to 5'-CGCGCG[GCA]-3' motif in vitro. The chain is RNA-binding protein 4 (RBM4) from Bos taurus (Bovine).